Reading from the N-terminus, the 124-residue chain is MGDRNLTPKQFGALGEQYAAAWLEEHGWTTLSRNWHTRYGELDIVMLNPEYTVVFVEVKSRRSMHYGYPQEAITPAKQHNLRKAACDWLLDRRNRVPHSAVRFDVVTIVLRVGRPLVHHIENAF.

This sequence belongs to the UPF0102 family.

This Bifidobacterium longum (strain NCC 2705) protein is UPF0102 protein BL0935.